We begin with the raw amino-acid sequence, 525 residues long: Peptide chain release factor 3 (525 aa).

One can recognise a tr-type G domain in the interval 11 to 279 (NKRRTFAIIS…TYLQFAPAPS (269 aa)). Residues 20–27 (SHPDAGKT), 88–92 (DTPGH), and 142–145 (NKFD) each bind GTP.

Belongs to the TRAFAC class translation factor GTPase superfamily. Classic translation factor GTPase family. PrfC subfamily.

It localises to the cytoplasm. Increases the formation of ribosomal termination complexes and stimulates activities of RF-1 and RF-2. It binds guanine nucleotides and has strong preference for UGA stop codons. It may interact directly with the ribosome. The stimulation of RF-1 and RF-2 is significantly reduced by GTP and GDP, but not by GMP. In Limosilactobacillus reuteri (strain DSM 20016) (Lactobacillus reuteri), this protein is Peptide chain release factor 3.